The following is a 458-amino-acid chain: tRNA-2-methylthio-N(6)-dimethylallyladenosine synthase (458 aa).

An MTTase N-terminal domain is found at 15–134 (KKVFIKTYGC…LPDLLEQTKQ (120 aa)). Residues Cys24, Cys60, Cys97, Cys175, Cys179, and Cys182 each contribute to the [4Fe-4S] cluster site. The 233-residue stretch at 161 to 393 (RKRGVSAFLT…QVLLLEQQNA (233 aa)) folds into the Radical SAM core domain. The region spanning 396-457 (RSKIGQTTDV…SNSFVGEIAN (62 aa)) is the TRAM domain.

The protein belongs to the methylthiotransferase family. MiaB subfamily. In terms of assembly, monomer. It depends on [4Fe-4S] cluster as a cofactor.

It is found in the cytoplasm. The enzyme catalyses N(6)-dimethylallyladenosine(37) in tRNA + (sulfur carrier)-SH + AH2 + 2 S-adenosyl-L-methionine = 2-methylsulfanyl-N(6)-dimethylallyladenosine(37) in tRNA + (sulfur carrier)-H + 5'-deoxyadenosine + L-methionine + A + S-adenosyl-L-homocysteine + 2 H(+). Catalyzes the methylthiolation of N6-(dimethylallyl)adenosine (i(6)A), leading to the formation of 2-methylthio-N6-(dimethylallyl)adenosine (ms(2)i(6)A) at position 37 in tRNAs that read codons beginning with uridine. This Bartonella quintana (strain Toulouse) (Rochalimaea quintana) protein is tRNA-2-methylthio-N(6)-dimethylallyladenosine synthase.